The chain runs to 569 residues: Pyruvate decarboxylase (569 aa).

Residues Asp38 and His124 each coordinate pyruvate. Thiamine diphosphate contacts are provided by residues Thr398 and 421–423; that span reads GSI. Asp451 is a Mg(2+) binding site. Thiamine diphosphate-binding positions include 452–453 and 478–483; these read GS and NQGYTI. Residues Asn478 and Gly480 each coordinate Mg(2+). Glu484 is a pyruvate binding site.

The protein belongs to the TPP enzyme family. As to quaternary structure, homotetramer. Mg(2+) is required as a cofactor. The cofactor is thiamine diphosphate.

It carries out the reaction a 2-oxocarboxylate + H(+) = an aldehyde + CO2. The enzyme catalyses pyruvate + H(+) = acetaldehyde + CO2. This chain is Pyruvate decarboxylase (pdcA), found in Aspergillus terreus (strain NIH 2624 / FGSC A1156).